The primary structure comprises 723 residues: Envelope glycoprotein H (723 aa).

The N-terminal stretch at 1 to 23 is a signal peptide; that stretch reads MSPATRFTVISCLVVSLITPSET. At 24–700 the chain is on the virion surface side; sequence SSWFDPFIEW…IIDIRQTSIF (677 aa). N-linked (GlcNAc...) asparagine; by host glycosylation is found at N39, N45, N144, and N174. The segment at 197-263 is interaction with gL; sequence HQFAIVLTFT…QSYRDDLLIV (67 aa). 6 N-linked (GlcNAc...) asparagine; by host glycosylation sites follow: N270, N340, N411, N543, N621, and N681. Residues 701–721 form a helical membrane-spanning segment; it reads MIMLYCSLGVLLLYGLYRLLH. Residues 722 to 723 lie on the Intravirion side of the membrane; sequence MI.

This sequence belongs to the herpesviridae glycoprotein H family. As to quaternary structure, interacts with glycoprotein L (gL); this interaction is necessary for the correct processing and cell surface expression of gH. The heterodimer gH/gL seems to interact with gB trimers during fusion. In terms of processing, N-glycosylated, O-glycosylated, and sialylated.

The protein localises to the virion membrane. It is found in the host cell membrane. The protein resides in the host endosome membrane. The heterodimer glycoprotein H-glycoprotein L is required for the fusion of viral and plasma membranes leading to virus entry into the host cell. Following initial binding to host receptor, membrane fusion is mediated by the fusion machinery composed of gB and the heterodimer gH/gL. May also be involved in the fusion between the virion envelope and the outer nuclear membrane during virion morphogenesis. This is Envelope glycoprotein H from Guinea pig cytomegalovirus (strain 22122) (GPCMV).